The following is a 194-amino-acid chain: Peptidyl-tRNA hydrolase (194 aa).

TRNA is bound at residue Tyr17. His22 serves as the catalytic Proton acceptor. Residues Tyr68, Asn70, and Asn116 each contribute to the tRNA site.

Belongs to the PTH family. Monomer.

Its subcellular location is the cytoplasm. It catalyses the reaction an N-acyl-L-alpha-aminoacyl-tRNA + H2O = an N-acyl-L-amino acid + a tRNA + H(+). Functionally, hydrolyzes ribosome-free peptidyl-tRNAs (with 1 or more amino acids incorporated), which drop off the ribosome during protein synthesis, or as a result of ribosome stalling. Catalyzes the release of premature peptidyl moieties from peptidyl-tRNA molecules trapped in stalled 50S ribosomal subunits, and thus maintains levels of free tRNAs and 50S ribosomes. The chain is Peptidyl-tRNA hydrolase from Pseudomonas savastanoi pv. phaseolicola (strain 1448A / Race 6) (Pseudomonas syringae pv. phaseolicola (strain 1448A / Race 6)).